The following is a 127-amino-acid chain: SH2 domain-containing protein 1A (127 aa).

The SH2 domain occupies 6–102 (VYHGKISRET…GIVIPLQYPV (97 aa)). Residues 67–92 (ETAPGVHKRYFRKIKNLISAFQKPDQ) form an interaction with FYN SH3 domain region. Lys89 bears the N6-acetyllysine mark. The interval 104–127 (KSSPRSTQGTTGIREDPDVCLKAP) is disordered. Residues 116-127 (IREDPDVCLKAP) show a composition bias toward basic and acidic residues.

In terms of assembly, interacts with CD84, CD244, LY9, SLAMF1 and FYN. Interacts with NTRK1, NTRK2 and NTRK3.

The protein resides in the cytoplasm. In terms of biological role, cytoplasmic adapter regulating receptors of the signaling lymphocytic activation molecule (SLAM) family such as SLAMF1, CD244, LY9, CD84, SLAMF6 and SLAMF7. In SLAM signaling seems to cooperate with SH2D1B/EAT-2. Initially it has been proposed that association with SLAMF1 prevents SLAMF1 binding to inhibitory effectors including INPP5D/SHIP1 and PTPN11/SHP-2. However, by simultaneous interactions, recruits FYN which subsequently phosphorylates and activates SLAMF1. Positively regulates CD244/2B4- and CD84-mediated natural killer (NK) cell functions. Can also promote CD48-, SLAMF6 -, LY9-, and SLAMF7-mediated NK cell activation. In the context of NK cell-mediated cytotoxicity enhances conjugate formation with target cells. May also regulate the activity of the neurotrophin receptors NTRK1, NTRK2 and NTRK3. In Saguinus oedipus (Cotton-top tamarin), this protein is SH2 domain-containing protein 1A (SH2D1A).